Reading from the N-terminus, the 185-residue chain is ATP-dependent protease subunit HslV (185 aa).

Thr-12 is a catalytic residue. Na(+)-binding residues include Ala-168, Cys-171, and Thr-174.

It belongs to the peptidase T1B family. HslV subfamily. A double ring-shaped homohexamer of HslV is capped on each side by a ring-shaped HslU homohexamer. The assembly of the HslU/HslV complex is dependent on binding of ATP.

The protein localises to the cytoplasm. The catalysed reaction is ATP-dependent cleavage of peptide bonds with broad specificity.. Its activity is regulated as follows. Allosterically activated by HslU binding. Protease subunit of a proteasome-like degradation complex believed to be a general protein degrading machinery. The chain is ATP-dependent protease subunit HslV from Ruegeria pomeroyi (strain ATCC 700808 / DSM 15171 / DSS-3) (Silicibacter pomeroyi).